Reading from the N-terminus, the 757-residue chain is Vitamin K-dependent gamma-carboxylase (757 aa).

Alanine 2 is modified (N-acetylalanine). Over 2 to 60 (AVHRGSALVAPASDKVQKNKSAQTSGLKQGSRMEKILGFEWTDLSSWQSVVTLLNKPTD) the chain is Cytoplasmic. The helical transmembrane segment at 61 to 81 (PANLAVFRFLFAFLMLLDIPQ) threads the bilayer. Topologically, residues 82–113 (ERGLSSLDRKYLDGLDVCRFPLLDALRPLPLD) are lumenal. A disulfide bridge links cysteine 99 with cysteine 450. The helical transmembrane segment at 114 to 134 (WMYLVYTIMFLGALGMMLGLC) threads the bilayer. The Cytoplasmic portion of the chain corresponds to 135-136 (YR). Residues 137–157 (LSCVLFLLPYWYVFLLDKTSW) traverse the membrane as a helical segment. The Lumenal segment spans residues 158-292 (NNHSYLYGLL…VSYFHCMNSQ (135 aa)). A helical membrane pass occupies residues 293-313 (LFSIGMFPYVMLASSPLFCSA). The Cytoplasmic portion of the chain corresponds to 314–361 (EWPRKLVARCPKRLQELLPTKAAPRPSASCVYKRSRGKAGPKPGLRHQ). The helical transmembrane segment at 362 to 382 (LGAIFTLLYLLEQLFLPYSHF) threads the bilayer. The Lumenal portion of the chain corresponds to 383–757 (LTQGYNNWTN…PDSEHVHSEF (375 aa)). The tract at residues 729 to 757 (EPVDESSASNTDSSNHPSEPDSEHVHSEF) is disordered. The span at 734 to 745 (SSASNTDSSNHP) shows a compositional bias: polar residues. A compositionally biased stretch (basic and acidic residues) spans 746-757 (SEPDSEHVHSEF).

This sequence belongs to the vitamin K-dependent gamma-carboxylase family. In terms of assembly, monomer. May interact with CALU.

Its subcellular location is the endoplasmic reticulum membrane. The enzyme catalyses 4-carboxy-L-glutamyl-[protein] + 2,3-epoxyphylloquinone + H2O + H(+) = phylloquinol + L-glutamyl-[protein] + CO2 + O2. Functionally, mediates the vitamin K-dependent carboxylation of glutamate residues to calcium-binding gamma-carboxyglutamate (Gla) residues with the concomitant conversion of the reduced hydroquinone form of vitamin K to vitamin K epoxide. Catalyzes gamma-carboxylation of various proteins, such as blood coagulation factors (F2, F7, F9 and F10), osteocalcin (bglap and bglap2) or matrix Gla protein (MGP). The chain is Vitamin K-dependent gamma-carboxylase (Ggcx) from Mus musculus (Mouse).